A 316-amino-acid chain; its full sequence is Phosphatidylinositol mannoside acyltransferase (316 aa).

H137 acts as the Proton acceptor in catalysis. Hexadecanoyl-CoA contacts are provided by H137 and R175. E211 is a catalytic residue. E240 contacts hexadecanoyl-CoA.

It belongs to the LpxL/LpxM/LpxP family.

It is found in the cell inner membrane. It catalyses the reaction a 2,6-O-bis(alpha-D-mannopyranosyl)-1-phosphatidyl-1D-myo-inositol + an acyl-CoA = a 2-O-(alpha-D-mannosyl)-6-O-(6-O-acyl-alpha-D-mannosyl)-1-phosphatidyl-1D-myo-inositol + CoA. It carries out the reaction a 1,2-diacyl-sn-glycero-3-phospho-[alpha-D-mannopyranosyl-(1&lt;-&gt;6)-D-myo-inositol] + an acyl-CoA = a 1,2-diacyl-sn-glycero-3-phospho-[alpha-D-6-acyl-mannopyranosyl-(1&lt;-&gt;6)-D-myo-inositol] + CoA. Its pathway is phospholipid metabolism; phosphatidylinositol metabolism. Its function is as follows. Catalyzes the transfer of a palmitoyl moiety from palmitoyl-CoA to the 6-position of the mannose ring linked to the 2-position of myo-inositol in phosphatidyl-myo-inositol monomannoside (PIM1) or dimannoside (PIM2). Essential for growth and survival in axenic cultures and during macrophage infection and in a mouse model of infection. In Mycobacterium tuberculosis (strain ATCC 25618 / H37Rv), this protein is Phosphatidylinositol mannoside acyltransferase.